Reading from the N-terminus, the 378-residue chain is 3-dehydroquinate synthase (378 aa).

NAD(+) contacts are provided by residues 115–119, 139–140, K152, and K161; these read GVVGD and TS. Residues E194, H256, and H275 each contribute to the Zn(2+) site.

This sequence belongs to the sugar phosphate cyclases superfamily. Dehydroquinate synthase family. Co(2+) is required as a cofactor. Requires Zn(2+) as cofactor. The cofactor is NAD(+).

The protein localises to the cytoplasm. The enzyme catalyses 7-phospho-2-dehydro-3-deoxy-D-arabino-heptonate = 3-dehydroquinate + phosphate. Its pathway is metabolic intermediate biosynthesis; chorismate biosynthesis; chorismate from D-erythrose 4-phosphate and phosphoenolpyruvate: step 2/7. In terms of biological role, catalyzes the conversion of 3-deoxy-D-arabino-heptulosonate 7-phosphate (DAHP) to dehydroquinate (DHQ). The sequence is that of 3-dehydroquinate synthase from Brucella abortus biovar 1 (strain 9-941).